The following is a 983-amino-acid chain: Bifunctional glutamine synthetase adenylyltransferase/adenylyl-removing enzyme (983 aa).

The tract at residues 1-490 is adenylyl removase; the sequence is MDRKSSVTID…AHGQVFYSPV (490 aa). Positions 496 to 983 are adenylyl transferase; sequence RIPTQDLRMS…RVVDAVFWNQ (488 aa).

This sequence belongs to the GlnE family. The cofactor is Mg(2+).

The catalysed reaction is [glutamine synthetase]-O(4)-(5'-adenylyl)-L-tyrosine + phosphate = [glutamine synthetase]-L-tyrosine + ADP. The enzyme catalyses [glutamine synthetase]-L-tyrosine + ATP = [glutamine synthetase]-O(4)-(5'-adenylyl)-L-tyrosine + diphosphate. Involved in the regulation of glutamine synthetase GlnA, a key enzyme in the process to assimilate ammonia. When cellular nitrogen levels are high, the C-terminal adenylyl transferase (AT) inactivates GlnA by covalent transfer of an adenylyl group from ATP to specific tyrosine residue of GlnA, thus reducing its activity. Conversely, when nitrogen levels are low, the N-terminal adenylyl removase (AR) activates GlnA by removing the adenylyl group by phosphorolysis, increasing its activity. The regulatory region of GlnE binds the signal transduction protein PII (GlnB) which indicates the nitrogen status of the cell. The sequence is that of Bifunctional glutamine synthetase adenylyltransferase/adenylyl-removing enzyme from Cutibacterium acnes (strain DSM 16379 / KPA171202) (Propionibacterium acnes).